A 254-amino-acid polypeptide reads, in one-letter code: Leucyl/phenylalanyl-tRNA--protein transferase (254 aa).

It belongs to the L/F-transferase family.

Its subcellular location is the cytoplasm. It carries out the reaction N-terminal L-lysyl-[protein] + L-leucyl-tRNA(Leu) = N-terminal L-leucyl-L-lysyl-[protein] + tRNA(Leu) + H(+). It catalyses the reaction N-terminal L-arginyl-[protein] + L-leucyl-tRNA(Leu) = N-terminal L-leucyl-L-arginyl-[protein] + tRNA(Leu) + H(+). The enzyme catalyses L-phenylalanyl-tRNA(Phe) + an N-terminal L-alpha-aminoacyl-[protein] = an N-terminal L-phenylalanyl-L-alpha-aminoacyl-[protein] + tRNA(Phe). Its function is as follows. Functions in the N-end rule pathway of protein degradation where it conjugates Leu, Phe and, less efficiently, Met from aminoacyl-tRNAs to the N-termini of proteins containing an N-terminal arginine or lysine. The sequence is that of Leucyl/phenylalanyl-tRNA--protein transferase from Burkholderia cenocepacia (strain HI2424).